The following is a 244-amino-acid chain: Cell division protein ZapD (244 aa).

Belongs to the ZapD family. In terms of assembly, interacts with FtsZ.

It localises to the cytoplasm. Its function is as follows. Cell division factor that enhances FtsZ-ring assembly. Directly interacts with FtsZ and promotes bundling of FtsZ protofilaments, with a reduction in FtsZ GTPase activity. This chain is Cell division protein ZapD, found in Shewanella sp. (strain MR-7).